An 81-amino-acid polypeptide reads, in one-letter code: MAHSVKIYDTCIGCTQCVRACPTDVLEMIPWNGCKANQIASAPRTEDCVGCKRCESACPTDFLSVRVYLGSETTRSMGLAY.

2 consecutive 4Fe-4S ferredoxin-type domains span residues 2–31 (AHSVKIYDTCIGCTQCVRACPTDVLEMIPW) and 39–68 (IASAPRTEDCVGCKRCESACPTDFLSVRVY). Residues cysteine 11, cysteine 14, cysteine 17, cysteine 21, cysteine 48, cysteine 51, cysteine 54, and cysteine 58 each coordinate [4Fe-4S] cluster.

The eukaryotic PSI reaction center is composed of at least 11 subunits. The cofactor is [4Fe-4S] cluster.

Its subcellular location is the plastid. The protein resides in the chloroplast thylakoid membrane. The catalysed reaction is reduced [plastocyanin] + hnu + oxidized [2Fe-2S]-[ferredoxin] = oxidized [plastocyanin] + reduced [2Fe-2S]-[ferredoxin]. In terms of biological role, apoprotein for the two 4Fe-4S centers FA and FB of photosystem I (PSI); essential for photochemical activity. FB is the terminal electron acceptor of PSI, donating electrons to ferredoxin. The C-terminus interacts with PsaA/B/D and helps assemble the protein into the PSI complex. Required for binding of PsaD and PsaE to PSI. PSI is a plastocyanin-ferredoxin oxidoreductase, converting photonic excitation into a charge separation, which transfers an electron from the donor P700 chlorophyll pair to the spectroscopically characterized acceptors A0, A1, FX, FA and FB in turn. This Psilotum nudum (Whisk fern) protein is Photosystem I iron-sulfur center.